Consider the following 576-residue polypeptide: POU domain, class 6, transcription factor 1 (576 aa).

Residues proline 65–glutamate 88 form a disordered region. In terms of domain architecture, POU-specific spans glutamate 414–glutamate 488. Residues lysine 509–serine 568 constitute a DNA-binding region (homeobox).

It belongs to the POU transcription factor family. Class-6 subfamily. Isoform C1 and isoform C2 are found in the brain, while isoform C7 is found in the testis.

The protein localises to the nucleus. In terms of biological role, transcription factor that binds preferentially to a variant of the octamer motif (5'-ATGATAAT-3'). This chain is POU domain, class 6, transcription factor 1 (Pou6f1), found in Mus musculus (Mouse).